A 344-amino-acid polypeptide reads, in one-letter code: tRNA(Ile)-lysidine synthase (344 aa).

Residue 43–48 coordinates ATP; sequence SGGADS.

The protein belongs to the tRNA(Ile)-lysidine synthase family.

It localises to the cytoplasm. The catalysed reaction is cytidine(34) in tRNA(Ile2) + L-lysine + ATP = lysidine(34) in tRNA(Ile2) + AMP + diphosphate + H(+). In terms of biological role, ligates lysine onto the cytidine present at position 34 of the AUA codon-specific tRNA(Ile) that contains the anticodon CAU, in an ATP-dependent manner. Cytidine is converted to lysidine, thus changing the amino acid specificity of the tRNA from methionine to isoleucine. This chain is tRNA(Ile)-lysidine synthase, found in Bordetella bronchiseptica (strain ATCC BAA-588 / NCTC 13252 / RB50) (Alcaligenes bronchisepticus).